The sequence spans 452 residues: Ribosomal protein uS12 methylthiotransferase RimO (452 aa).

Residues 8–123 (PRVGFVSLGC…VMQAVHTHLP (116 aa)) enclose the MTTase N-terminal domain. 6 residues coordinate [4Fe-4S] cluster: Cys-17, Cys-53, Cys-82, Cys-154, Cys-158, and Cys-161. Residues 140–381 (LTPKHYAYLK…MEVAEEVSAR (242 aa)) form the Radical SAM core domain. The TRAM domain maps to 384–452 (QRKVGQTLRV…ADGHDLWGEI (69 aa)).

It belongs to the methylthiotransferase family. RimO subfamily. [4Fe-4S] cluster serves as cofactor.

It is found in the cytoplasm. It catalyses the reaction L-aspartate(89)-[ribosomal protein uS12]-hydrogen + (sulfur carrier)-SH + AH2 + 2 S-adenosyl-L-methionine = 3-methylsulfanyl-L-aspartate(89)-[ribosomal protein uS12]-hydrogen + (sulfur carrier)-H + 5'-deoxyadenosine + L-methionine + A + S-adenosyl-L-homocysteine + 2 H(+). Functionally, catalyzes the methylthiolation of an aspartic acid residue of ribosomal protein uS12. This is Ribosomal protein uS12 methylthiotransferase RimO from Cupriavidus pinatubonensis (strain JMP 134 / LMG 1197) (Cupriavidus necator (strain JMP 134)).